Here is a 659-residue protein sequence, read N- to C-terminus: Protein FAM161A (659 aa).

A disordered region spans residues 34-59 (LGERQQQRTASVSPQRLPRTSMGTPA). Residues 96–120 (YVQVEKLKKAHLQNMEQLEKMYDKK) are a coiled coil. Disordered stretches follow at residues 165–190 (GSVS…EHSV) and 401–428 (LAPG…PKIS). Over residues 408 to 426 (GTKKGKCYKPKEKQKHKPK) the composition is skewed to basic residues. The stretch at 531–557 (AIRKREKQRTKDYMKELEAMEQRVLNK) forms a coiled coil. The tract at residues 594–659 (NGQSASVDEH…TDEDHSMEEI (66 aa)) is disordered. Residues 600-616 (VDEHVSVREENNPRAES) are compositionally biased toward basic and acidic residues. Over residues 637-650 (PESEEAQEEDAYST) the composition is skewed to acidic residues.

Belongs to the FAM161 family.

It is found in the cytoplasm. It localises to the cytoskeleton. The protein localises to the cilium basal body. Its subcellular location is the cell projection. The protein resides in the cilium. It is found in the microtubule organizing center. It localises to the centrosome. The protein localises to the centriole. Functionally, involved in ciliogenesis. The sequence is that of Protein FAM161A (fam161a) from Xenopus tropicalis (Western clawed frog).